The sequence spans 424 residues: UDP-N-acetylglucosamine 1-carboxyvinyltransferase (424 aa).

A phosphoenolpyruvate-binding site is contributed by 22–23 (KN). UDP-N-acetyl-alpha-D-glucosamine is bound at residue Arg-96. Cys-120 acts as the Proton donor in catalysis. Cys-120 is subject to 2-(S-cysteinyl)pyruvic acid O-phosphothioketal. UDP-N-acetyl-alpha-D-glucosamine-binding positions include 125–129 (RPVDQ), Asp-312, and Ile-334.

This sequence belongs to the EPSP synthase family. MurA subfamily.

It localises to the cytoplasm. It carries out the reaction phosphoenolpyruvate + UDP-N-acetyl-alpha-D-glucosamine = UDP-N-acetyl-3-O-(1-carboxyvinyl)-alpha-D-glucosamine + phosphate. The protein operates within cell wall biogenesis; peptidoglycan biosynthesis. Functionally, cell wall formation. Adds enolpyruvyl to UDP-N-acetylglucosamine. The polypeptide is UDP-N-acetylglucosamine 1-carboxyvinyltransferase (Polynucleobacter necessarius subsp. necessarius (strain STIR1)).